A 203-amino-acid polypeptide reads, in one-letter code: E3 ubiquitin-protein ligase RNF152 (203 aa).

Residues 12–55 form an RING-type zinc finger; sequence CQICFNYYSPRRRPKLLDCKHTCCSVCLQQMRTSQKDVRCPWCR. Residues 106 to 165 form a necessary for interaction with RRAGA region; the sequence is ISKERALLPGDMGCRLLPGSQQKSVTVVTIPAEQQPLQGGAPQEAVEEEQDRRGVVKSST. A helical transmembrane segment spans residues 167–187; the sequence is SGVCTVILVACVLVFLLGIVL.

It belongs to the RNF152 family. As to quaternary structure, interacts with RRAGA (inactive GDP-bound form); stimulated by amino acid starvation. Interacts with SEC16A. Post-translationally, ubiquitinated. Autoubiquitinated in vitro, leading to its degradation by the proteasome. In terms of tissue distribution, widely expressed.

Its subcellular location is the lysosome membrane. The enzyme catalyses S-ubiquitinyl-[E2 ubiquitin-conjugating enzyme]-L-cysteine + [acceptor protein]-L-lysine = [E2 ubiquitin-conjugating enzyme]-L-cysteine + N(6)-ubiquitinyl-[acceptor protein]-L-lysine.. The protein operates within protein modification; protein ubiquitination. Functionally, E3 ubiquitin-protein ligase that acts as a negative regulator of mTORC1 signaling by mediating ubiquitination of RagA/RRAGA and RHEB. Catalyzes 'Lys-63'-linked polyubiquitination of RagA/RRAGA in response to amino acid starvation, thereby regulating mTORC1 signaling. Also mediates monoubiquitination of RHEB, promoting its association with the TSC-TBC complex and subsequent inhibition. Also mediates 'Lys-48'-linked polyubiquitination of target proteins and their subsequent targeting to the proteasome for degradation. Induces apoptosis when overexpressed. The sequence is that of E3 ubiquitin-protein ligase RNF152 from Homo sapiens (Human).